The sequence spans 589 residues: Coronatine-insensitive protein homolog 2 (589 aa).

Positions 18–59 (IPDVALGLVMGFVEDPWDRDAISLVCRHWCRVDALSRKHVTV) constitute an F-box domain. Jasmonate-binding residues include R87, R352, R414, and R501.

Interacts with TIFY9/JAZ5, TIFY11C/JAZ11 and TIFY11D/JAZ12 in a coronatine-dependent manner.

Involved in jasmonate (JA) signaling. Required for jasmonate signaling in plant defense responses. Component of SCF(COI1) E3 ubiquitin ligase complexes, which may mediate the ubiquitination and subsequent proteasomal degradation of target proteins, including TIFY/JAZ family. This is Coronatine-insensitive protein homolog 2 from Oryza sativa subsp. indica (Rice).